We begin with the raw amino-acid sequence, 477 residues long: 3-isopropylmalate dehydratase large subunit (477 aa).

[4Fe-4S] cluster is bound by residues Cys352, Cys413, and Cys416.

This sequence belongs to the aconitase/IPM isomerase family. LeuC type 1 subfamily. Heterodimer of LeuC and LeuD. The cofactor is [4Fe-4S] cluster.

The enzyme catalyses (2R,3S)-3-isopropylmalate = (2S)-2-isopropylmalate. It functions in the pathway amino-acid biosynthesis; L-leucine biosynthesis; L-leucine from 3-methyl-2-oxobutanoate: step 2/4. In terms of biological role, catalyzes the isomerization between 2-isopropylmalate and 3-isopropylmalate, via the formation of 2-isopropylmaleate. The sequence is that of 3-isopropylmalate dehydratase large subunit from Pseudomonas entomophila (strain L48).